We begin with the raw amino-acid sequence, 321 residues long: Aspartate carbamoyltransferase catalytic subunit (321 aa).

Arg-70 and Thr-71 together coordinate carbamoyl phosphate. L-aspartate is bound at residue Lys-98. 3 residues coordinate carbamoyl phosphate: Arg-120, His-148, and Gln-151. 2 residues coordinate L-aspartate: Arg-181 and Arg-235. Carbamoyl phosphate contacts are provided by Gly-276 and Pro-277.

The protein belongs to the aspartate/ornithine carbamoyltransferase superfamily. ATCase family. As to quaternary structure, heterododecamer (2C3:3R2) of six catalytic PyrB chains organized as two trimers (C3), and six regulatory PyrI chains organized as three dimers (R2).

The enzyme catalyses carbamoyl phosphate + L-aspartate = N-carbamoyl-L-aspartate + phosphate + H(+). It participates in pyrimidine metabolism; UMP biosynthesis via de novo pathway; (S)-dihydroorotate from bicarbonate: step 2/3. In terms of biological role, catalyzes the condensation of carbamoyl phosphate and aspartate to form carbamoyl aspartate and inorganic phosphate, the committed step in the de novo pyrimidine nucleotide biosynthesis pathway. The chain is Aspartate carbamoyltransferase catalytic subunit from Gluconacetobacter diazotrophicus (strain ATCC 49037 / DSM 5601 / CCUG 37298 / CIP 103539 / LMG 7603 / PAl5).